Reading from the N-terminus, the 562-residue chain is Nucleoprotein (562 aa).

A binding site for the cap structure m7GTP region spans residues Met-53 to Ile-238. Positions 381 and 383 each coordinate Mn(2+). Zn(2+) contacts are provided by Glu-391, Cys-498, His-501, and Cys-522. Asp-526 is a Mn(2+) binding site.

It belongs to the arenaviridae nucleocapsid protein family. Homomultimerizes to form the nucleocapsid. Binds to viral genomic RNA. Interacts with glycoprotein G2. Interacts with protein Z; this interaction probably directs the encapsidated genome to budding sites. Interacts with protein L; this interaction does not interfere with Z-L interaction. Interacts with host IKBKE (via Protein kinase domain); the interaction inhibits IKBKE kinase activity.

The protein resides in the virion. Its subcellular location is the host cytoplasm. In terms of biological role, encapsidates the genome, protecting it from nucleases. The encapsidated genomic RNA is termed the nucleocapsid (NC). Serves as template for viral transcription and replication. The increased presence of protein N in host cell does not seem to trigger the switch from transcription to replication as observed in other negative strain RNA viruses. Through the interaction with host IKBKE, strongly inhibits the phosphorylation and nuclear translocation of host IRF3, a protein involved in interferon activation pathway, leading to the inhibition of interferon-beta and IRF3-dependent promoters activation. Also encodes a functional 3'-5' exoribonuclease that degrades preferentially dsRNA substrates and thereby participates in the suppression of interferon induction. This Bear Canyon mammarenavirus (isolate Mouse/United States/AV A0070039/2000) (BCNV) protein is Nucleoprotein.